A 153-amino-acid chain; its full sequence is MKTFVLHIFIFALVAFASASRDSAKKIGSQYDNFETCLTEHGLTEDDIFSIGEVSSGQHKTNHEDTELHKNGCVMQCMLEKDGLMSGADYDEEKMREDYIKETGAQPGDQRIEALNACMQETKDMEDKCDKSLVLVACVLAAEAILADSSEAA.

The N-terminal stretch at 1–19 (MKTFVLHIFIFALVAFASA) is a signal peptide. 3 disulfides stabilise this stretch: C37/C77, C73/C129, and C118/C138.

The protein belongs to the PBP/GOBP family. Homodimer.

The protein resides in the secreted. Its function is as follows. Colony queen number, a major feature of social organization, is associated with worker genotype for Gp-9. Colonies are headed by either a single reproductive queen (monogyne form) or multiple queens (polygyne form). Differences in worker Gp-9 genotypes between social forms may cause differences in workers' abilities to recognize queens and regulate their numbers. In Solenopsis electra (Fire ant), this protein is Pheromone-binding protein Gp-9.